The following is a 3106-amino-acid chain: Cilia- and flagella-associated protein 54 (3106 aa).

Low complexity-rich tracts occupy residues 1–24 (MASS…VSPV), 34–48 (STAV…KSSS), and 2356–2368 (ESCS…TSTT). Disordered regions lie at residues 1-58 (MASS…THSE) and 2354-2374 (PEES…KDDS).

The protein belongs to the CFAP54 family. In terms of tissue distribution, expressed at high level in the testis and at a low level in the lung and brain.

It localises to the cytoplasm. It is found in the cytoskeleton. The protein resides in the cilium axoneme. In terms of biological role, required for assembly and function of cilia and flagella. This is Cilia- and flagella-associated protein 54 from Mus musculus (Mouse).